The sequence spans 85 residues: Small ribosomal subunit protein bS16 (85 aa).

Belongs to the bacterial ribosomal protein bS16 family.

The protein is Small ribosomal subunit protein bS16 of Rubrobacter xylanophilus (strain DSM 9941 / JCM 11954 / NBRC 16129 / PRD-1).